Consider the following 171-residue polypeptide: Shikimate kinase (171 aa).

Residue 14–19 participates in ATP binding; sequence GAGKST. Ser18 serves as a coordination point for Mg(2+). Residues Asp36, Arg60, and Gly82 each coordinate substrate. Arg120 is an ATP binding site. Arg139 provides a ligand contact to substrate. An ATP-binding site is contributed by Gln156.

This sequence belongs to the shikimate kinase family. As to quaternary structure, monomer. The cofactor is Mg(2+).

The protein resides in the cytoplasm. It carries out the reaction shikimate + ATP = 3-phosphoshikimate + ADP + H(+). Its pathway is metabolic intermediate biosynthesis; chorismate biosynthesis; chorismate from D-erythrose 4-phosphate and phosphoenolpyruvate: step 5/7. In terms of biological role, catalyzes the specific phosphorylation of the 3-hydroxyl group of shikimic acid using ATP as a cosubstrate. The polypeptide is Shikimate kinase (Shewanella pealeana (strain ATCC 700345 / ANG-SQ1)).